The primary structure comprises 299 residues: UPF0282 protein TK1681 (299 aa).

It belongs to the UPF0282 family.

The sequence is that of UPF0282 protein TK1681 from Thermococcus kodakarensis (strain ATCC BAA-918 / JCM 12380 / KOD1) (Pyrococcus kodakaraensis (strain KOD1)).